The following is a 1047-amino-acid chain: FACT complex subunit SPT16 (1047 aa).

At alanine 2 the chain carries N-acetylalanine. Residue lysine 139 is modified to N6-acetyllysine. Residue serine 188 is modified to Phosphoserine. Lysine 196 and lysine 223 each carry N6-acetyllysine. Residues 432–507 (LKNEDEEEEE…GEQQIQKARK (76 aa)) are a coiled coil. Phosphoserine is present on serine 455. Residues 492–518 (RLTEQKGEQQIQKARKSNVSYKNPSLM) are disordered. Lysine 497 is covalently cross-linked (Glycyl lysine isopeptide (Lys-Gly) (interchain with G-Cter in SUMO2)). Residues 499–514 (EQQIQKARKSNVSYKN) show a composition bias toward polar residues. A Phosphoserine modification is found at serine 508. An N6-acetyllysine; alternate modification is found at lysine 513. Lysine 513 participates in a covalent cross-link: Glycyl lysine isopeptide (Lys-Gly) (interchain with G-Cter in SUMO2); alternate. Lysine 647 is covalently cross-linked (Glycyl lysine isopeptide (Lys-Gly) (interchain with G-Cter in SUMO2)). Phosphoserine occurs at positions 650 and 658. Residues lysine 732 and lysine 786 each carry the N6-acetyllysine modification. Threonine 903 carries the post-translational modification Phosphothreonine. Residue lysine 904 is modified to N6-acetyllysine. The disordered stretch occupies residues 918-1047 (EQGGWSFLEP…SSAPPKKKRK (130 aa)). The span at 927–973 (PEGEGSDAEEGDSESEIEDETFNPSEDDYEEEEEDSDEDYSSEAEES) shows a compositional bias: acidic residues. Phosphoserine is present on residues serine 979, serine 982, serine 986, and serine 1015. The segment covering 985 to 1005 (ESGKDWDELEEEARKADRESR) has biased composition (basic and acidic residues). Positions 1024–1039 (VHSSGRGSNRGSRHSS) are enriched in low complexity.

The protein belongs to the peptidase M24 family. SPT16 subfamily. In terms of assembly, interacts with MYOG (via C-terminal region). Component of the FACT complex, a stable heterodimer of SSRP1 and SUPT16H. Also a component of a CK2-SPT16-SSRP1 complex which forms following UV irradiation, composed of SSRP1, SUPT16H, CSNK2A1, CSNK2A2 and CSNK2B. Interacts with NEK9. Binds to histone H2A-H2B. Identified in a centromere complex containing histones H2A, H2B and H4, and at least CENPA, CENPB, CENPC, CENPT, CENPN, HJURP, SUPT16H, SSRP1 and RSF1. Interacts with GTF2E2. (Microbial infection) Interacts with Herpes simplex virus 1 (HHV-1) protein ICP22; this interaction relocalizes the FACT complex to viral genomes in infected cells. In terms of processing, ADP-ribosylated. ADP-ribosylation by PARP1 is induced by genotoxic stress and correlates with dissociation of FACT from chromatin. As to expression, ubiquitous.

The protein resides in the nucleus. It localises to the chromosome. Component of the FACT complex, a general chromatin factor that acts to reorganize nucleosomes. The FACT complex is involved in multiple processes that require DNA as a template such as mRNA elongation, DNA replication and DNA repair. During transcription elongation the FACT complex acts as a histone chaperone that both destabilizes and restores nucleosomal structure. It facilitates the passage of RNA polymerase II and transcription by promoting the dissociation of one histone H2A-H2B dimer from the nucleosome, then subsequently promotes the reestablishment of the nucleosome following the passage of RNA polymerase II. The FACT complex is probably also involved in phosphorylation of 'Ser-392' of p53/TP53 via its association with CK2 (casein kinase II). The polypeptide is FACT complex subunit SPT16 (SUPT16H) (Homo sapiens (Human)).